The primary structure comprises 287 residues: Large ribosomal subunit protein uL2 (287 aa).

The tract at residues 221-287 (RGSVMNPCDH…SKRSRGGRDS (67 aa)) is disordered. Residues 258–287 (KTRKKNKPSNKLVVRRRRRISKRSRGGRDS) are compositionally biased toward basic residues.

Belongs to the universal ribosomal protein uL2 family. In terms of assembly, part of the 50S ribosomal subunit. Forms a bridge to the 30S subunit in the 70S ribosome.

One of the primary rRNA binding proteins. Required for association of the 30S and 50S subunits to form the 70S ribosome, for tRNA binding and peptide bond formation. It has been suggested to have peptidyltransferase activity; this is somewhat controversial. Makes several contacts with the 16S rRNA in the 70S ribosome. In Prochlorococcus marinus subsp. pastoris (strain CCMP1986 / NIES-2087 / MED4), this protein is Large ribosomal subunit protein uL2.